The primary structure comprises 430 residues: mRNA cap guanine-N(7) methyltransferase (430 aa).

A disordered region spans residues 1 to 88 (MALRPEKPVW…YDLEERKKKQ (88 aa)). The span at 15–37 (QYDRQYGKLEEPKPPREESKPGD) shows a compositional bias: basic and acidic residues. The region spanning 136-419 (SPIIKLRNFN…FYTVFAFRKV (284 aa)) is the mRNA cap 0 methyltransferase domain. 145 to 146 (NN) lines the mRNA pocket. Lys-149, Gly-167, Asp-189, Asp-218, Gln-244, and Tyr-249 together coordinate S-adenosyl-L-methionine.

This sequence belongs to the class I-like SAM-binding methyltransferase superfamily. mRNA cap 0 methyltransferase family.

The protein resides in the nucleus. The enzyme catalyses a 5'-end (5'-triphosphoguanosine)-ribonucleoside in mRNA + S-adenosyl-L-methionine = a 5'-end (N(7)-methyl 5'-triphosphoguanosine)-ribonucleoside in mRNA + S-adenosyl-L-homocysteine. Responsible for methylating the 5'-cap structure of mRNAs. The polypeptide is mRNA cap guanine-N(7) methyltransferase (ABD1) (Eremothecium gossypii (strain ATCC 10895 / CBS 109.51 / FGSC 9923 / NRRL Y-1056) (Yeast)).